Here is a 335-residue protein sequence, read N- to C-terminus: Tryptophan--tRNA ligase (335 aa).

ATP contacts are provided by residues 13 to 15 and 21 to 22; these read QPS and GN. A 'HIGH' region motif is present at residues 14 to 22; it reads PSGELTIGN. Aspartate 138 serves as a coordination point for L-tryptophan. Residues 150 to 152, isoleucine 189, and 198 to 202 each bind ATP; these read GKD and KMSKS. Residues 198–202 carry the 'KMSKS' region motif; sequence KMSKS.

This sequence belongs to the class-I aminoacyl-tRNA synthetase family. As to quaternary structure, homodimer.

It localises to the cytoplasm. It catalyses the reaction tRNA(Trp) + L-tryptophan + ATP = L-tryptophyl-tRNA(Trp) + AMP + diphosphate + H(+). Catalyzes the attachment of tryptophan to tRNA(Trp). In Clostridium acetobutylicum (strain ATCC 824 / DSM 792 / JCM 1419 / IAM 19013 / LMG 5710 / NBRC 13948 / NRRL B-527 / VKM B-1787 / 2291 / W), this protein is Tryptophan--tRNA ligase.